A 1368-amino-acid chain; its full sequence is DNA-directed RNA polymerase subunit beta (1368 aa).

The protein belongs to the RNA polymerase beta chain family. In terms of assembly, the RNAP catalytic core consists of 2 alpha, 1 beta, 1 beta' and 1 omega subunit. When a sigma factor is associated with the core the holoenzyme is formed, which can initiate transcription.

The catalysed reaction is RNA(n) + a ribonucleoside 5'-triphosphate = RNA(n+1) + diphosphate. Functionally, DNA-dependent RNA polymerase catalyzes the transcription of DNA into RNA using the four ribonucleoside triphosphates as substrates. This chain is DNA-directed RNA polymerase subunit beta, found in Burkholderia lata (strain ATCC 17760 / DSM 23089 / LMG 22485 / NCIMB 9086 / R18194 / 383).